Here is a 534-residue protein sequence, read N- to C-terminus: Serine/threonine-protein kinase NLK (534 aa).

Sufficient for interaction with DAPK3 stretches follow at residues 8-132 and 131-423; these read LVSC…KAHH and HHHQ…SKRI. 2 required for interaction with TAB2 regions span residues 8 to 311 and 441 to 534; these read LVSC…VVTQ and YHTC…LVWE. Disordered stretches follow at residues 29 to 79 and 97 to 147; these read AAAA…SSAA and QQPY…DIEP. Over residues 33 to 61 the composition is skewed to basic residues; that stretch reads GHHHHHHHHLPHLPPPHLHHHHHPQHHLH. The segment covering 110-126 has biased composition (low complexity); that stretch reads PGPAAAAPAQVQAAAAA. The segment covering 129–138 has biased composition (basic residues); sequence KAHHHQHSHH. The Protein kinase domain maps to 145 to 434; that stretch reads IEPDRPIGYG…AKDALAHPYL (290 aa). ATP-binding positions include 151–159 and Lys174; that span reads IGYGAFGVV. The active-site Proton acceptor is the Asp271. Thr305 carries the post-translational modification Phosphothreonine; by autocatalysis. The short motif at 305 to 307 is the TQE element; it reads TQE. The segment at 435–534 is required for homodimerization and kinase activation and localization to the nucleus; the sequence is DEGRLRYHTC…EMPPSPLVWE (100 aa). Ser529 carries the post-translational modification Phosphoserine.

Belongs to the protein kinase superfamily. CMGC Ser/Thr protein kinase family. MAP kinase subfamily. In terms of assembly, homodimer. Homodimerization is required for intermolecular autophosphorylation, kinase activation and nuclear localization. May interact with components of cullin-RING-based SCF (SKP1-CUL1-F-box protein) E3 ubiquitin-protein ligase complexes. Interacts with LEF1, MEF2A, MYBL1 and MYBL2. Interacts with the upstream activating kinases HIPK2 and MAP3K7/TAK1. Interaction with MAP3K7/TAK1 seems to be indirect, and may be mediated by other proteins such as STAT3, TAB1 and TAB2. Interacts with and phosphorylates a number of transcription factors including FOXO1, FOXO3, FOXO4, MYB, NOTCH1 and TCF7L2/TCF4. Interacts with DAPK3/ZIPK, and this interaction may disrupt interaction with transcription factors such as TCF7L2/TCF4. Forms a transcriptional repressor complex with CHD7, PPARG and SETDB1. Interacts with RNF138/NARF. Interacts with ATF5; the interaction stabilizes ATF5 at the protein level in a kinase-independent manner. Requires Mg(2+) as cofactor. Phosphorylated on Thr-305. Intermolecular autophosphorylation on Thr-305 activates the enzyme.

The protein resides in the nucleus. It is found in the cytoplasm. The enzyme catalyses L-seryl-[protein] + ATP = O-phospho-L-seryl-[protein] + ADP + H(+). It carries out the reaction L-threonyl-[protein] + ATP = O-phospho-L-threonyl-[protein] + ADP + H(+). Activated by the non-canonical Wnt signaling pathway, in which WNT5A leads to activation of MAP3K7/TAK1 and HIPK2, which subsequently phosphorylates and activates this protein. Activated by dimerization and subsequent intermolecular autophosphorylation on Thr-305. Other cytokines such as IL6 may also activate this regulatory circuit. Serine/threonine-protein kinase that regulates a number of transcription factors with key roles in cell fate determination. Positive effector of the non-canonical Wnt signaling pathway, acting downstream of WNT5A, MAP3K7/TAK1 and HIPK2. Negative regulator of the canonical Wnt/beta-catenin signaling pathway. Binds to and phosphorylates TCF7L2/TCF4 and LEF1, promoting the dissociation of the TCF7L2/LEF1/beta-catenin complex from DNA, as well as the ubiquitination and subsequent proteolysis of LEF1. Together these effects inhibit the transcriptional activation of canonical Wnt/beta-catenin target genes. Negative regulator of the Notch signaling pathway. Binds to and phosphorylates NOTCH1, thereby preventing the formation of a transcriptionally active ternary complex of NOTCH1, RBPJ/RBPSUH and MAML1. Negative regulator of the MYB family of transcription factors. Phosphorylation of MYB leads to its subsequent proteolysis while phosphorylation of MYBL1 and MYBL2 inhibits their interaction with the coactivator CREBBP. Other transcription factors may also be inhibited by direct phosphorylation of CREBBP itself. Acts downstream of IL6 and MAP3K7/TAK1 to phosphorylate STAT3, which is in turn required for activation of NLK by MAP3K7/TAK1. Upon IL1B stimulus, cooperates with ATF5 to activate the transactivation activity of C/EBP subfamily members. Phosphorylates ATF5 but also stabilizes ATF5 protein levels in a kinase-independent manner. Acts as an inhibitor of the mTORC1 complex in response to osmotic stress by mediating phosphorylation of RPTOR, thereby preventing recruitment of the mTORC1 complex to lysosomes. This is Serine/threonine-protein kinase NLK (NLK) from Bos taurus (Bovine).